Reading from the N-terminus, the 326-residue chain is Fos-related antigen 2 (326 aa).

Residue Met1 is modified to N-acetylmethionine. Residues 1-39 (MYQDYPGNFDTSSRGSSGSPAHAESYSSGGGGQQKFRVD) form a disordered region. A compositionally biased stretch (polar residues) spans 9 to 19 (FDTSSRGSSGS). Lys35 is covalently cross-linked (Glycyl lysine isopeptide (Lys-Gly) (interchain with G-Cter in SUMO2)). N6-acetyllysine; alternate is present on Lys104. Lys104 participates in a covalent cross-link: Glycyl lysine isopeptide (Lys-Gly) (interchain with G-Cter in SUMO2); alternate. Disordered regions lie at residues 111-131 (GRRR…RIRR), 193-244 (ISPE…QRSV), and 289-326 (EQES…LLAL). Ser120 is modified (phosphoserine). A bZIP domain is found at 124-187 (EEKRRIRRER…EKLEFMLVAH (64 aa)). The basic motif stretch occupies residues 126–128 (KRR). The tract at residues 129 to 136 (IRRERNKL) is leucine-zipper. Position 200 is a phosphoserine (Ser200). Positions 201–211 (PPTSGLQSLRG) are enriched in polar residues. Residue Lys222 forms a Glycyl lysine isopeptide (Lys-Gly) (interchain with G-Cter in SUMO2); alternate linkage. Residue Lys222 forms a Glycyl lysine isopeptide (Lys-Gly) (interchain with G-Cter in SUMO1); alternate linkage. Ser230 carries the post-translational modification Phosphoserine. Lys239 participates in a covalent cross-link: Glycyl lysine isopeptide (Lys-Gly) (interchain with G-Cter in SUMO2). Residues Ser308 and Ser320 each carry the phosphoserine modification. Residues 308 to 320 (SSSGDQSSDSLNS) are compositionally biased toward low complexity.

This sequence belongs to the bZIP family. Fos subfamily. In terms of assembly, heterodimer. Interacts with the BAF multiprotein chromatin-remodeling complex subunits SMARCB1 and SMARCD1. Interacts with ARID1A and JUN. As to expression, expressed in the brain cortex. Expressed at night in pineal gland (at protein level). Also expressed in osteoblasts (at protein level).

The protein localises to the nucleus. In terms of biological role, controls osteoclast survival and size. As a dimer with JUN, activates LIF transcription. Activates CEBPB transcription in PGE2-activated osteoblasts. In Rattus norvegicus (Rat), this protein is Fos-related antigen 2 (Fosl2).